A 486-amino-acid chain; its full sequence is Malonate-semialdehyde dehydrogenase 2 (486 aa).

NAD(+) contacts are provided by phenylalanine 154, lysine 178, glutamate 181, arginine 182, and serine 231. Cysteine 286 functions as the Nucleophile in the catalytic mechanism. Residue glutamate 385 participates in NAD(+) binding.

This sequence belongs to the aldehyde dehydrogenase family. IolA subfamily. As to quaternary structure, homotetramer.

The catalysed reaction is 3-oxopropanoate + NAD(+) + CoA + H2O = hydrogencarbonate + acetyl-CoA + NADH + H(+). It catalyses the reaction 2-methyl-3-oxopropanoate + NAD(+) + CoA + H2O = propanoyl-CoA + hydrogencarbonate + NADH + H(+). It functions in the pathway polyol metabolism; myo-inositol degradation into acetyl-CoA; acetyl-CoA from myo-inositol: step 7/7. Its function is as follows. Catalyzes the oxidation of malonate semialdehyde (MSA) and methylmalonate semialdehyde (MMSA) into acetyl-CoA and propanoyl-CoA, respectively. Is involved in a myo-inositol catabolic pathway. Bicarbonate, and not CO2, is the end-product of the enzymatic reaction. The protein is Malonate-semialdehyde dehydrogenase 2 of Shouchella clausii (strain KSM-K16) (Alkalihalobacillus clausii).